The sequence spans 361 residues: Phospho-N-acetylmuramoyl-pentapeptide-transferase (361 aa).

The next 10 membrane-spanning stretches (helical) occupy residues 21-41 (YLTVRAILALFTALLLSLWIG), 74-94 (MGGIMILFAIGVSTLLWANLA), 97-117 (YVWFCLFVLFGYGAVGFVDDY), 132-152 (WKYFWLSVIALISAFGMYAIG), 168-188 (VMPQLGLFYIVLAYFVIVGTG), 199-219 (GLAIMPTVFVAAAFALIAWAT), 239-259 (LVIFCTAIVGAGLGFLWFNTY), 264-284 (FMGDVGSLALGGVLGTIAVLV), 288-308 (FLLVIMGGVFVVETLSVILQV), and 339-359 (VIIRFWIISLMLVLLGLITLK).

It belongs to the glycosyltransferase 4 family. MraY subfamily. The cofactor is Mg(2+).

The protein resides in the cell inner membrane. The catalysed reaction is UDP-N-acetyl-alpha-D-muramoyl-L-alanyl-gamma-D-glutamyl-meso-2,6-diaminopimeloyl-D-alanyl-D-alanine + di-trans,octa-cis-undecaprenyl phosphate = di-trans,octa-cis-undecaprenyl diphospho-N-acetyl-alpha-D-muramoyl-L-alanyl-D-glutamyl-meso-2,6-diaminopimeloyl-D-alanyl-D-alanine + UMP. Its pathway is cell wall biogenesis; peptidoglycan biosynthesis. Functionally, catalyzes the initial step of the lipid cycle reactions in the biosynthesis of the cell wall peptidoglycan: transfers peptidoglycan precursor phospho-MurNAc-pentapeptide from UDP-MurNAc-pentapeptide onto the lipid carrier undecaprenyl phosphate, yielding undecaprenyl-pyrophosphoryl-MurNAc-pentapeptide, known as lipid I. The protein is Phospho-N-acetylmuramoyl-pentapeptide-transferase of Histophilus somni (strain 129Pt) (Haemophilus somnus).